The sequence spans 175 residues: Ribosome maturation factor RimM (175 aa).

Positions Glu98–Phe175 constitute a PRC barrel domain.

This sequence belongs to the RimM family. In terms of assembly, binds ribosomal protein uS19.

The protein localises to the cytoplasm. An accessory protein needed during the final step in the assembly of 30S ribosomal subunit, possibly for assembly of the head region. Essential for efficient processing of 16S rRNA. May be needed both before and after RbfA during the maturation of 16S rRNA. It has affinity for free ribosomal 30S subunits but not for 70S ribosomes. This is Ribosome maturation factor RimM from Pseudomonas aeruginosa (strain ATCC 15692 / DSM 22644 / CIP 104116 / JCM 14847 / LMG 12228 / 1C / PRS 101 / PAO1).